Consider the following 152-residue polypeptide: Small ribosomal subunit protein uS13 (152 aa).

The residue at position 2 (Ser2) is an N-acetylserine. A Glycyl lysine isopeptide (Lys-Gly) (interchain with G-Cter in SUMO2) cross-link involves residue Lys91. An N6-acetyllysine; alternate mark is found at Lys94 and Lys106. Glycyl lysine isopeptide (Lys-Gly) (interchain with G-Cter in SUMO2); alternate cross-links involve residues Lys94 and Lys106.

It belongs to the universal ribosomal protein uS13 family. As to quaternary structure, component of the small ribosomal subunit.

The protein resides in the cytoplasm. Its function is as follows. Component of the small ribosomal subunit. The ribosome is a large ribonucleoprotein complex responsible for the synthesis of proteins in the cell. This Homo sapiens (Human) protein is Small ribosomal subunit protein uS13 (RPS18).